We begin with the raw amino-acid sequence, 223 residues long: Phosphoribosylformylglycinamidine synthase subunit PurQ (223 aa).

The Glutamine amidotransferase type-1 domain occupies 3 to 223 (FAVLVFPGSN…MVNSWREQNV (221 aa)). Cys-85 functions as the Nucleophile in the catalytic mechanism. Active-site residues include His-193 and Glu-195.

As to quaternary structure, part of the FGAM synthase complex composed of 1 PurL, 1 PurQ and 2 PurS subunits.

The protein localises to the cytoplasm. It carries out the reaction N(2)-formyl-N(1)-(5-phospho-beta-D-ribosyl)glycinamide + L-glutamine + ATP + H2O = 2-formamido-N(1)-(5-O-phospho-beta-D-ribosyl)acetamidine + L-glutamate + ADP + phosphate + H(+). The catalysed reaction is L-glutamine + H2O = L-glutamate + NH4(+). It participates in purine metabolism; IMP biosynthesis via de novo pathway; 5-amino-1-(5-phospho-D-ribosyl)imidazole from N(2)-formyl-N(1)-(5-phospho-D-ribosyl)glycinamide: step 1/2. Its function is as follows. Part of the phosphoribosylformylglycinamidine synthase complex involved in the purines biosynthetic pathway. Catalyzes the ATP-dependent conversion of formylglycinamide ribonucleotide (FGAR) and glutamine to yield formylglycinamidine ribonucleotide (FGAM) and glutamate. The FGAM synthase complex is composed of three subunits. PurQ produces an ammonia molecule by converting glutamine to glutamate. PurL transfers the ammonia molecule to FGAR to form FGAM in an ATP-dependent manner. PurS interacts with PurQ and PurL and is thought to assist in the transfer of the ammonia molecule from PurQ to PurL. The polypeptide is Phosphoribosylformylglycinamidine synthase subunit PurQ (Staphylococcus haemolyticus (strain JCSC1435)).